A 666-amino-acid polypeptide reads, in one-letter code: MKVNTLPLAAITGQEAVKLALTLAAVDPGLKGVAIAGRRGTGKTVLARGLRHLLPPIDQLEGCPCHCNPAEPHSWCNRCRERFTEESGLSDSEVPVVQRNAPFSEVPLGATEDRLLGAIDVEQSLAGGVRAWQPGLLGEANRGVLYIDQLNLLDDGLVNSLFDAMSGTCRLEREGISVQYPSNFVLIGTYDPDEGGLRGHLADRIAMHVSSGVIVDLEQRLEIMRRQELFSEAPEDFFDLYNDEQEQTLRRIEKARTVLPQVTISEAQTLYLIGQSLKRGVPGHRADLFSVRLAKAHAAWQGRTAVEPIDLAVAVEFVIKPRQTVDLPDEEEQMQPPPPPPPPPPPPEPDKPDDPETPPDEAPKDEQTLQLPEEFFFDAEEVPMEDELLSLQNKVQRQARGGAHGKQKSLERGRYARALLPPPGKNSRVAVDATLRAAAPYQRQRRESGQYGDRQVIVTNSDIRAKQFVRKSGALIIFVVDASGSMAFNRMSSAKGAVSVLLNEAYVNRDKVALIIFRGQQAETLVPPTRSVELAKKRFDQVPVGGGSPLAGAIAQAIEVGVNSIGSDVGQVIITLITDGRGNVPMDPQAGPKNREQLNEEILALSRLVPENGFSMLVIDTANKFTSTGFAKKIADAAFAQYYYLPKMTAASLAETVKSGVHALRK.

ATP is bound at residue 37–44 (GRRGTGKT). The disordered stretch occupies residues 327-367 (LPDEEEQMQPPPPPPPPPPPPEPDKPDDPETPPDEAPKDEQ). Positions 335–347 (QPPPPPPPPPPPP) are enriched in pro residues. Residues 475-661 (LIIFVVDASG…SLAETVKSGV (187 aa)) enclose the VWFA domain.

Belongs to the Mg-chelatase subunits D/I family.

It catalyses the reaction protoporphyrin IX + Mg(2+) + ATP + H2O = Mg-protoporphyrin IX + ADP + phosphate + 3 H(+). It functions in the pathway porphyrin-containing compound metabolism; bacteriochlorophyll biosynthesis. Functionally, involved in bacteriochlorophyll biosynthesis; introduces a magnesium ion into protoporphyrin IX to yield Mg-protoporphyrin IX. The protein is Magnesium-chelatase 67 kDa subunit (bchD) of Heliobacterium mobile (Heliobacillus mobilis).